Reading from the N-terminus, the 447-residue chain is Cytochrome P450 BJ-4 homolog (447 aa).

Cys392 lines the heme pocket.

This sequence belongs to the cytochrome P450 family. The cofactor is heme.

Its function is as follows. Cytochromes P450 are a group of heme-thiolate monooxygenases. They oxidize a variety of structurally unrelated compounds, including steroids, fatty acids, and xenobiotics. The polypeptide is Cytochrome P450 BJ-4 homolog (cyp117A2) (Sinorhizobium fredii (strain NBRC 101917 / NGR234)).